Here is a 293-residue protein sequence, read N- to C-terminus: Large ribosomal subunit protein uL2c (293 aa).

Residues 224–245 are disordered; sequence VMNPVDHPHGGGEGKSPIGRAR.

It belongs to the universal ribosomal protein uL2 family. Part of the 50S ribosomal subunit.

Its subcellular location is the plastid. It localises to the chloroplast. The protein is Large ribosomal subunit protein uL2c (rpl2) of Pyropia yezoensis (Susabi-nori).